The following is a 249-amino-acid chain: Proteasome subunit alpha (249 aa).

The protein belongs to the peptidase T1A family. The 20S proteasome core is composed of 14 alpha and 14 beta subunits that assemble into four stacked heptameric rings, resulting in a barrel-shaped structure. The two inner rings, each composed of seven catalytic beta subunits, are sandwiched by two outer rings, each composed of seven alpha subunits. The catalytic chamber with the active sites is on the inside of the barrel. Has a gated structure, the ends of the cylinder being occluded by the N-termini of the alpha-subunits. Is capped at one or both ends by the proteasome regulatory ATPase, PAN.

It is found in the cytoplasm. With respect to regulation, the formation of the proteasomal ATPase PAN-20S proteasome complex, via the docking of the C-termini of PAN into the intersubunit pockets in the alpha-rings, triggers opening of the gate for substrate entry. Interconversion between the open-gate and close-gate conformations leads to a dynamic regulation of the 20S proteasome proteolysis activity. Component of the proteasome core, a large protease complex with broad specificity involved in protein degradation. The polypeptide is Proteasome subunit alpha (Methanosarcina barkeri (strain Fusaro / DSM 804)).